We begin with the raw amino-acid sequence, 192 residues long: Cytidylate kinase (192 aa).

Residue 12-20 (GLAGSGTTT) participates in ATP binding.

This sequence belongs to the cytidylate kinase family. Type 2 subfamily.

The protein resides in the cytoplasm. It catalyses the reaction CMP + ATP = CDP + ADP. The enzyme catalyses dCMP + ATP = dCDP + ADP. The sequence is that of Cytidylate kinase from Pyrococcus furiosus (strain ATCC 43587 / DSM 3638 / JCM 8422 / Vc1).